The sequence spans 288 residues: Formamidopyrimidine-DNA glycosylase (288 aa).

The Schiff-base intermediate with DNA role is filled by P2. E3 (proton donor) is an active-site residue. The active-site Proton donor; for beta-elimination activity is K58. The DNA site is built by H99, R118, and K161. Residues 252–288 (RVYDREAEPCPREGCGGTIKRIVQAGRSTFFCAKCQR) form an FPG-type zinc finger. R278 acts as the Proton donor; for delta-elimination activity in catalysis.

Belongs to the FPG family. In terms of assembly, monomer. Zn(2+) serves as cofactor.

It catalyses the reaction Hydrolysis of DNA containing ring-opened 7-methylguanine residues, releasing 2,6-diamino-4-hydroxy-5-(N-methyl)formamidopyrimidine.. The enzyme catalyses 2'-deoxyribonucleotide-(2'-deoxyribose 5'-phosphate)-2'-deoxyribonucleotide-DNA = a 3'-end 2'-deoxyribonucleotide-(2,3-dehydro-2,3-deoxyribose 5'-phosphate)-DNA + a 5'-end 5'-phospho-2'-deoxyribonucleoside-DNA + H(+). Involved in base excision repair of DNA damaged by oxidation or by mutagenic agents. Acts as a DNA glycosylase that recognizes and removes damaged bases. Has a preference for oxidized purines, such as 7,8-dihydro-8-oxoguanine (8-oxoG). Has AP (apurinic/apyrimidinic) lyase activity and introduces nicks in the DNA strand. Cleaves the DNA backbone by beta-delta elimination to generate a single-strand break at the site of the removed base with both 3'- and 5'-phosphates. The sequence is that of Formamidopyrimidine-DNA glycosylase from Beijerinckia indica subsp. indica (strain ATCC 9039 / DSM 1715 / NCIMB 8712).